Reading from the N-terminus, the 293-residue chain is MSNSNWLEKILPAVRRPQESRRNNIPEGLWRKCPRCEGVVYRPELDRNMDVCPKCDHHLRISARRRLKLFLDEGVQTEIGTELSPVDRLKFKDSKKYKDRLVAAQKATDEKDALVVLKGALHGEPLVACAFEFSFMGGSMGSVVGERFVRAVNVCLEQKLPLVCFAASGGARMQEALFSLMQMAKTSAALEKMRQAGLPFISVLTDPVYGGVSASLAMLGDVNVAEPNALIGFAGPRVIEQTVRQKLPEGFQRSEFLLEHGAIDMIVSRHDMRETLYRLLANMMGWPPLALDD.

The region spanning 29–293 (LWRKCPRCEG…MGWPPLALDD (265 aa)) is the CoA carboxyltransferase N-terminal domain. Zn(2+) contacts are provided by Cys33, Cys36, Cys52, and Cys55. The segment at 33–55 (CPRCEGVVYRPELDRNMDVCPKC) adopts a C4-type zinc-finger fold.

The protein belongs to the AccD/PCCB family. As to quaternary structure, acetyl-CoA carboxylase is a heterohexamer composed of biotin carboxyl carrier protein (AccB), biotin carboxylase (AccC) and two subunits each of ACCase subunit alpha (AccA) and ACCase subunit beta (AccD). Zn(2+) serves as cofactor.

It is found in the cytoplasm. It catalyses the reaction N(6)-carboxybiotinyl-L-lysyl-[protein] + acetyl-CoA = N(6)-biotinyl-L-lysyl-[protein] + malonyl-CoA. It participates in lipid metabolism; malonyl-CoA biosynthesis; malonyl-CoA from acetyl-CoA: step 1/1. Functionally, component of the acetyl coenzyme A carboxylase (ACC) complex. Biotin carboxylase (BC) catalyzes the carboxylation of biotin on its carrier protein (BCCP) and then the CO(2) group is transferred by the transcarboxylase to acetyl-CoA to form malonyl-CoA. This is Acetyl-coenzyme A carboxylase carboxyl transferase subunit beta from Alcanivorax borkumensis (strain ATCC 700651 / DSM 11573 / NCIMB 13689 / SK2).